A 130-amino-acid chain; its full sequence is Glycine cleavage system H protein (130 aa).

The region spanning 25–107 is the Lipoyl-binding domain; the sequence is IATIGITEFA…YGEGWFLKVR (83 aa). K66 is subject to N6-lipoyllysine.

It belongs to the GcvH family. In terms of assembly, the glycine cleavage system is composed of four proteins: P, T, L and H. Requires (R)-lipoate as cofactor.

Functionally, the glycine cleavage system catalyzes the degradation of glycine. The H protein shuttles the methylamine group of glycine from the P protein to the T protein. The sequence is that of Glycine cleavage system H protein from Nostoc sp. (strain PCC 7120 / SAG 25.82 / UTEX 2576).